The following is a 290-amino-acid chain: Protein translocase subunit SecF (290 aa).

Helical transmembrane passes span 15 to 35 (VFMILSLLFVIIGMYFFFTKG), 131 to 151 (KAILAAVLAIIVMLVYITVRF), 156 to 176 (AISAIINEAFVLLATISIFAI), 184 to 204 (SFIAAILTLLGYAINDNIIVF), 234 to 256 (TLYTVITTLLAITPLLIWGGVVL), and 260 to 282 (ILAIYLGIIIGTYSTIYIASAIL).

Belongs to the SecD/SecF family. SecF subfamily. As to quaternary structure, forms a complex with SecD. Part of the essential Sec protein translocation apparatus which comprises SecA, SecYEG and auxiliary proteins SecDF. Other proteins may also be involved.

It is found in the cell inner membrane. Part of the Sec protein translocase complex. Interacts with the SecYEG preprotein conducting channel. SecDF uses the proton motive force (PMF) to complete protein translocation after the ATP-dependent function of SecA. The sequence is that of Protein translocase subunit SecF from Dictyoglomus turgidum (strain DSM 6724 / Z-1310).